Reading from the N-terminus, the 184-residue chain is Large ribosomal subunit protein uL6 (184 aa).

This sequence belongs to the universal ribosomal protein uL6 family. As to quaternary structure, part of the 50S ribosomal subunit.

This protein binds to the 23S rRNA, and is important in its secondary structure. It is located near the subunit interface in the base of the L7/L12 stalk, and near the tRNA binding site of the peptidyltransferase center. This chain is Large ribosomal subunit protein uL6, found in Mycoplasma genitalium (strain ATCC 33530 / DSM 19775 / NCTC 10195 / G37) (Mycoplasmoides genitalium).